Consider the following 421-residue polypeptide: UDP-N-acetylglucosamine 1-carboxyvinyltransferase (421 aa).

22 to 23 (KN) contacts phosphoenolpyruvate. Arg-93 contributes to the UDP-N-acetyl-alpha-D-glucosamine binding site. Cys-117 acts as the Proton donor in catalysis. 2-(S-cysteinyl)pyruvic acid O-phosphothioketal is present on Cys-117. Residues 122–126 (RPVDL), Asp-308, and Ile-330 each bind UDP-N-acetyl-alpha-D-glucosamine.

Belongs to the EPSP synthase family. MurA subfamily.

Its subcellular location is the cytoplasm. The catalysed reaction is phosphoenolpyruvate + UDP-N-acetyl-alpha-D-glucosamine = UDP-N-acetyl-3-O-(1-carboxyvinyl)-alpha-D-glucosamine + phosphate. It functions in the pathway cell wall biogenesis; peptidoglycan biosynthesis. Cell wall formation. Adds enolpyruvyl to UDP-N-acetylglucosamine. The protein is UDP-N-acetylglucosamine 1-carboxyvinyltransferase of Pseudomonas putida (strain ATCC 700007 / DSM 6899 / JCM 31910 / BCRC 17059 / LMG 24140 / F1).